The chain runs to 236 residues: Small ribosomal subunit protein uS2c (236 aa).

In terms of assembly, component of the chloroplast small ribosomal subunit (SSU). Mature 70S chloroplast ribosomes of higher plants consist of a small (30S) and a large (50S) subunit. The 30S small subunit contains 1 molecule of ribosomal RNA (16S rRNA) and 24 different proteins. The 50S large subunit contains 3 rRNA molecules (23S, 5S and 4.5S rRNA) and 33 different proteins.

It is found in the plastid. It localises to the chloroplast. Component of the chloroplast ribosome (chloro-ribosome), a dedicated translation machinery responsible for the synthesis of chloroplast genome-encoded proteins, including proteins of the transcription and translation machinery and components of the photosynthetic apparatus. In Spinacia oleracea (Spinach), this protein is Small ribosomal subunit protein uS2c (rps2).